Reading from the N-terminus, the 185-residue chain is UPF0301 protein Csal_0058 (185 aa).

It belongs to the UPF0301 (AlgH) family.

This chain is UPF0301 protein Csal_0058, found in Chromohalobacter salexigens (strain ATCC BAA-138 / DSM 3043 / CIP 106854 / NCIMB 13768 / 1H11).